Here is a 106-residue protein sequence, read N- to C-terminus: ATPase inhibitor, mitochondrial (106 aa).

Residues 1-25 constitute a mitochondrion transit peptide; that stretch reads MAGSALAVRARFGVWGMKVLQTRGF. An N-terminal inhibitory region region spans residues 26 to 52; it reads VSDSSDSMDTGAGSIREAGGAFGKREK. The interval 26 to 58 is disordered; sequence VSDSSDSMDTGAGSIREAGGAFGKREKAEEDRY. S39 bears the Phosphoserine mark. Residues 48–58 are compositionally biased toward basic and acidic residues; it reads GKREKAEEDRY. A coiled-coil region spans residues 60-106; it reads REKTKEQLAALRKHHEDEIDHHSKEIERLQKQIERHKKKIQQLKNNH. Residues 74 to 106 are antiparallel alpha-helical coiled coil region; it reads HEDEIDHHSKEIERLQKQIERHKKKIQQLKNNH. An N6-succinyllysine modification is found at K103.

Belongs to the ATPase inhibitor family. In terms of assembly, homodimer; represents the active form and is present at a pH value below 6.5. Homotetramer; represents the inactive form and is present at a pH value above 7.0.

It localises to the mitochondrion. Endogenous F(1)F(o)-ATPase inhibitor limiting ATP depletion when the mitochondrial membrane potential falls below a threshold and the F(1)F(o)-ATP synthase starts hydrolyzing ATP to pump protons out of the mitochondrial matrix. Required to avoid the consumption of cellular ATP when the F(1)F(o)-ATP synthase enzyme acts as an ATP hydrolase. Indirectly acts as a regulator of heme synthesis in erythroid tissues: regulates heme synthesis by modulating the mitochondrial pH and redox potential, allowing FECH to efficiently catalyze the incorporation of iron into protoporphyrin IX to produce heme. This is ATPase inhibitor, mitochondrial from Mus musculus (Mouse).